Here is a 131-residue protein sequence, read N- to C-terminus: Riboflavin kinase (131 aa).

Position 11–16 (11–16) interacts with CDP; that stretch reads GLQKAG. Mg(2+) contacts are provided by Thr-40 and Asn-42. Thr-98 and Glu-106 together coordinate FMN. 111–114 provides a ligand contact to CDP; that stretch reads EKLR.

Belongs to the archaeal riboflavin kinase family. Requires Mg(2+) as cofactor.

The catalysed reaction is riboflavin + CTP = CDP + FMN + H(+). The protein operates within cofactor biosynthesis; FMN biosynthesis; FMN from riboflavin (CTP route): step 1/1. Its function is as follows. Catalyzes the CTP-dependent phosphorylation of riboflavin (vitamin B2) to form flavin mononucleotide (FMN). This is Riboflavin kinase from Methanosphaera stadtmanae (strain ATCC 43021 / DSM 3091 / JCM 11832 / MCB-3).